A 227-amino-acid polypeptide reads, in one-letter code: Threonine--tRNA ligase (227 aa).

The interval 1–120 is catalytic; that stretch reads DIELKLSTRP…LIEHYEGAFP (120 aa).

This sequence belongs to the class-II aminoacyl-tRNA synthetase family. As to quaternary structure, homodimer.

Its subcellular location is the cytoplasm. The catalysed reaction is tRNA(Thr) + L-threonine + ATP = L-threonyl-tRNA(Thr) + AMP + diphosphate + H(+). Functionally, catalyzes the attachment of threonine to tRNA(Thr) in a two-step reaction: L-threonine is first activated by ATP to form Thr-AMP and then transferred to the acceptor end of tRNA(Thr). Also edits incorrectly charged L-seryl-tRNA(Thr). The chain is Threonine--tRNA ligase from Pseudomonas syringae pv. syringae.